The primary structure comprises 551 residues: Protein PNS1 (551 aa).

The segment at 1–72 is disordered; the sequence is MSAQEFYQGG…TGGQPVYQDT (72 aa). Topologically, residues 1-94 are cytoplasmic; it reads MSAQEFYQGG…RMNPRKRVND (94 aa). The segment covering 8-19 has biased composition (low complexity); the sequence is QGGNQRGYQQQQ. A compositionally biased stretch (polar residues) spans 45–63; the sequence is PPNYNMKPSQPYASTNPET. The helical transmembrane segment at 95–115 threads the bilayer; sequence IIPLILFIAAVVGFAVVSGIA. Residues 116–147 are Extracellular-facing; it reads IHGFVQVNGLGGGMGDSSIGRTGSSITLDYHT. The helical transmembrane segment at 148–168 threads the bilayer; it reads VYLLLVVVALGLVIASLYLAA. Topologically, residues 169–177 are cytoplasmic; it reads LRAFTKIIL. A helical transmembrane segment spans residues 178–198; sequence EVTLALTVILNIGICIYYFII. Topologically, residues 199-200 are extracellular; sequence QY. Residues 201 to 221 form a helical membrane-spanning segment; that stretch reads WSGAIIFLIIALVSVFFYWGM. Topologically, residues 222–244 are cytoplasmic; sequence RKRIPLAKLLLQTTIDVTKHHPS. Residues 245-265 form a helical membrane-spanning segment; it reads VYVVVFIGLIIQAAVSVWYTF. Over 266–307 the chain is Extracellular; the sequence is TCIAIYVKWTPGSAACSDGGCSSSKVAGLVFYATFSYLWLSQ. A helical membrane pass occupies residues 308-328; that stretch reads VIGNVILCTLAGGVFGGWYYY. Topologically, residues 329–356 are cytoplasmic; the sequence is GPRTPGGGVPKRASLLAFVRASTLSLGS. The helical transmembrane segment at 357 to 377 threads the bilayer; the sequence is IAFGSLLVTILELLRLILQLF. Over 378 to 386 the chain is Extracellular; sequence RQYEAGQGD. Residues 387 to 407 traverse the membrane as a helical segment; that stretch reads MIGSILICIAQCCIGCIQWMV. Over 408–452 the chain is Cytoplasmic; it reads EYFNKYAYIEIALYGKSYIPAAKDTWRLLKDRGIDALVNDSLVGT. The chain crosses the membrane as a helical span at residues 453–473; the sequence is ALMWGAYINGFLCAVLGYFYL. Residues 474–488 lie on the Extracellular side of the membrane; it reads RFTHPAYNSDGQYSA. A helical membrane pass occupies residues 489–509; that stretch reads PVILFSFLIGLNESFTVGSAI. Over 510–551 the chain is Cytoplasmic; the sequence is DAGVSTIFVGLGEDPMVLAERSPGLFEMIRQVYPRVVQGVPH.

This sequence belongs to the CTL (choline transporter-like) family.

The protein resides in the cell membrane. In terms of biological role, probably involved in transport through the plasma membrane. The sequence is that of Protein PNS1 (PNS1) from Cryptococcus neoformans var. neoformans serotype D (strain B-3501A) (Filobasidiella neoformans).